The following is a 422-amino-acid chain: Protein MANNAN SYNTHESIS-RELATED 1 (422 aa).

Residues 1–6 are Cytoplasmic-facing; that stretch reads MGVDLR. Residues 7 to 26 traverse the membrane as a helical; Signal-anchor for type II membrane protein segment; it reads QVVAGILTITMFVMLGQMLH. At 27 to 422 the chain is on the lumenal side; it reads RDYFDSLQEK…KNHLAYSCFC (396 aa). 263–265 is a substrate binding site; sequence DLR.

It belongs to the glycosyltransferase GT106 family. Widely expressed.

Its subcellular location is the golgi apparatus membrane. It participates in glycan biosynthesis. In terms of biological role, glycosyltransferase involved in mannan biosynthesis. In Arabidopsis thaliana (Mouse-ear cress), this protein is Protein MANNAN SYNTHESIS-RELATED 1.